Consider the following 80-residue polypeptide: DNA-binding protein S1FA2 (80 aa).

Residues 54-59 carry the Nuclear localization signal motif; that stretch reads PPRKKK. Positions 55–70 are enriched in basic residues; that stretch reads PRKKKPVSKKKMKREK. A disordered region spans residues 55-80; that stretch reads PRKKKPVSKKKMKREKLKQGVSAPGE.

Belongs to the S1FA transcription factor family.

It localises to the nucleus. Functionally, DNA-binding protein that specifically recognizes a negative element (S1F) within the RPS1 promoter. The polypeptide is DNA-binding protein S1FA2 (S1FA2) (Oryza sativa subsp. japonica (Rice)).